Consider the following 691-residue polypeptide: Elongation factor G (691 aa).

The 275-residue stretch at 12–286 (KKLRNIGIMA…GILEYLPSPL (275 aa)) folds into the tr-type G domain. Residues 21-28 (AHIDAGKT), 85-89 (DTPGH), and 139-142 (NKMD) contribute to the GTP site.

Belongs to the TRAFAC class translation factor GTPase superfamily. Classic translation factor GTPase family. EF-G/EF-2 subfamily.

The protein resides in the cytoplasm. Functionally, catalyzes the GTP-dependent ribosomal translocation step during translation elongation. During this step, the ribosome changes from the pre-translocational (PRE) to the post-translocational (POST) state as the newly formed A-site-bound peptidyl-tRNA and P-site-bound deacylated tRNA move to the P and E sites, respectively. Catalyzes the coordinated movement of the two tRNA molecules, the mRNA and conformational changes in the ribosome. The polypeptide is Elongation factor G (Thermosipho africanus (strain TCF52B)).